The chain runs to 331 residues: Ketol-acid reductoisomerase (NADP(+)) (331 aa).

The KARI N-terminal Rossmann domain maps to A2–T182. NADP(+) is bound by residues Y25–Q28, S51, S53, and D83–Q86. H108 is an active-site residue. An NADP(+)-binding site is contributed by G134. One can recognise a KARI C-terminal knotted domain in the interval T183–L328. Residues D191, E195, E227, and E231 each coordinate Mg(2+). S252 serves as a coordination point for substrate.

The protein belongs to the ketol-acid reductoisomerase family. Mg(2+) is required as a cofactor.

The catalysed reaction is (2R)-2,3-dihydroxy-3-methylbutanoate + NADP(+) = (2S)-2-acetolactate + NADPH + H(+). It catalyses the reaction (2R,3R)-2,3-dihydroxy-3-methylpentanoate + NADP(+) = (S)-2-ethyl-2-hydroxy-3-oxobutanoate + NADPH + H(+). It functions in the pathway amino-acid biosynthesis; L-isoleucine biosynthesis; L-isoleucine from 2-oxobutanoate: step 2/4. Its pathway is amino-acid biosynthesis; L-valine biosynthesis; L-valine from pyruvate: step 2/4. In terms of biological role, involved in the biosynthesis of branched-chain amino acids (BCAA). Catalyzes an alkyl-migration followed by a ketol-acid reduction of (S)-2-acetolactate (S2AL) to yield (R)-2,3-dihydroxy-isovalerate. In the isomerase reaction, S2AL is rearranged via a Mg-dependent methyl migration to produce 3-hydroxy-3-methyl-2-ketobutyrate (HMKB). In the reductase reaction, this 2-ketoacid undergoes a metal-dependent reduction by NADPH to yield (R)-2,3-dihydroxy-isovalerate. This chain is Ketol-acid reductoisomerase (NADP(+)), found in Thermosynechococcus vestitus (strain NIES-2133 / IAM M-273 / BP-1).